The following is an 851-amino-acid chain: Alanine--tRNA ligase (851 aa).

4 residues coordinate Zn(2+): H554, H558, C656, and H660.

Belongs to the class-II aminoacyl-tRNA synthetase family. It depends on Zn(2+) as a cofactor.

Its subcellular location is the cytoplasm. The catalysed reaction is tRNA(Ala) + L-alanine + ATP = L-alanyl-tRNA(Ala) + AMP + diphosphate. Functionally, catalyzes the attachment of alanine to tRNA(Ala) in a two-step reaction: alanine is first activated by ATP to form Ala-AMP and then transferred to the acceptor end of tRNA(Ala). Also edits incorrectly charged Ser-tRNA(Ala) and Gly-tRNA(Ala) via its editing domain. The sequence is that of Alanine--tRNA ligase from Aliarcobacter butzleri (strain RM4018) (Arcobacter butzleri).